We begin with the raw amino-acid sequence, 527 residues long: Chorismate synthase (527 aa).

Catalysis depends on residues histidine 17, histidine 104, and aspartate 485.

This sequence belongs to the chorismate synthase family.

It is found in the cytoplasm. Its subcellular location is the cytosol. The enzyme catalyses 5-O-(1-carboxyvinyl)-3-phosphoshikimate = chorismate + phosphate. The catalysed reaction is FMNH2 + NADP(+) = FMN + NADPH + 2 H(+). It participates in metabolic intermediate biosynthesis; chorismate biosynthesis; chorismate from D-erythrose 4-phosphate and phosphoenolpyruvate: step 7/7. Its function is as follows. Bifunctional chorismate synthase and flavin reductase. Catalyzes the conversion of 5-enolpyruvylshikimate 3-phosphate (EPSP) to form chorismate. Acts also as a flavin reductase (FR) able to generate reduced flavin mononucleotide in the presence of NADPH. This chain is Chorismate synthase, found in Plasmodium falciparum (isolate 3D7).